Consider the following 167-residue polypeptide: MASGVTVNDEVIKVFNEMKVRKSSTPEEIKKRKKAVLFCLSPDKKEIIVEETKQILVGDIGEAVPDPYRTFVNLLPLDDCRYGLYDATYETKESKKEDLVFIFWAPDNAPLKSKMIYASSKDAIKKKFTGIKHEWQVNGLDDIKDRCTLADKLGGNVVVSLEGVPLK.

The 150-residue stretch at 4 to 153 (GVTVNDEVIK…KDRCTLADKL (150 aa)) folds into the ADF-H domain. Positions 30–34 (KKRKK) match the Nuclear localization signal motif.

Belongs to the actin-binding proteins ADF family.

Its subcellular location is the nucleus matrix. The protein resides in the cytoplasm. It is found in the cytoskeleton. In terms of biological role, controls reversibly actin polymerization and depolymerization in a pH-sensitive manner. It has the ability to bind G- and F-actin in a 1:1 ratio of cofilin to actin. It is the major component of intranuclear and cytoplasmic actin rods. This is Cofilin-2 (cfl2) from Xenopus tropicalis (Western clawed frog).